Reading from the N-terminus, the 237-residue chain is NADH-ubiquinone oxidoreductase assembly factor N7BML (237 aa).

Residues 214–223 (VEKERDDSGK) show a composition bias toward basic and acidic residues. The segment at 214–237 (VEKERDDSGKPAEWTPKAAVRRRG) is disordered.

Belongs to the complex I NDUFA12 subunit family.

It localises to the mitochondrion. Functionally, acts as an assembly factor of mitochondrial complex I. This is NADH-ubiquinone oxidoreductase assembly factor N7BML from Yarrowia lipolytica (strain CLIB 122 / E 150) (Yeast).